A 571-amino-acid chain; its full sequence is Podocalyxin (571 aa).

The first 22 residues, 1–22, serve as a signal peptide directing secretion; sequence MRPAPPPPLLLLLLLLPPPSLS. At 23–474 the chain is on the extracellular side; it reads HDGTIIAATS…EETEDRFSMP (452 aa). The disordered stretch occupies residues 94 to 361; sequence NTVIAPDQDE…QGDDRIKCES (268 aa). Residues 106-116 are compositionally biased toward polar residues; that stretch reads STNPTIATSDS. An N-linked (GlcNAc...) asparagine glycan is attached at asparagine 123. Composition is skewed to polar residues over residues 126 to 144, 151 to 169, 176 to 203, and 218 to 245; these read ILPS…TQTA, NPGT…QTTS, KPSS…STTL, and TASS…SSVT. N-linked (GlcNAc...) asparagine glycosylation is present at asparagine 199. Low complexity predominate over residues 282-300; it reads TTSLPSETESLESPSSESP. Residues 301–311 show a composition bias toward pro residues; sequence SQPPKLRPTGP. Residues 312–322 are compositionally biased toward low complexity; the sequence is PSSGSSGPAAS. N-linked (GlcNAc...) asparagine glycans are attached at residues asparagine 373 and asparagine 383. Residues 475 to 495 form a helical membrane-spanning segment; that stretch reads LIITIVCMASFLLLVAALYGC. Over 496–571 the chain is Cytoplasmic; sequence CHQRLSQRKD…DLDEEEDTHL (76 aa). Threonine 531 carries the phosphothreonine modification. Serine 550 carries the phosphoserine modification. Position 569 is a phosphothreonine (threonine 569).

The protein belongs to the podocalyxin family. Found in a complex with EZR, PODXL and NHERF2. Associates with the actin cytoskeleton through complex formation with EZR and NHERF2. Interacts (via the C-terminal PDZ-binding motif DTHL) with NHERF1 (via the PDZ domains); interaction is not detected in glomerular epithelium cells. Interacts (via the C-terminal PDZ-binding motif DTHL) with NHERF2 (via the PDZ 1 domain); interaction is detected in glomerular epithelium cells. Interacts with EZR. Monomer; when associated with the membrane raft. Oligomer; when integrated in the apical membrane. Interacts with NHERF2. Interacts (via the C-terminal PDZ-binding motif DTHL) with NHERF1 (via the PDZ domains); the interaction take place early in the secretory pathway and is necessary for its apical membrane sorting. In terms of processing, N- and O-linked glycosylated. Sialoglycoprotein. As to expression, expressed in glomerular and tubular epithelial cells and peritubular capillaries of the kidney (at protein level). Expressed in heart, lung, renal cortex and medulla, kidney and muscle.

It localises to the apical cell membrane. The protein resides in the membrane raft. It is found in the cell projection. The protein localises to the lamellipodium. Its subcellular location is the filopodium. It localises to the ruffle. The protein resides in the microvillus. It is found in the membrane. Functionally, involved in the regulation of both adhesion and cell morphology and cancer progression. Functions as an anti-adhesive molecule that maintains an open filtration pathway between neighboring foot processes in the podocyte by charge repulsion. Acts as a pro-adhesive molecule, enhancing the adherence of cells to immobilized ligands, increasing the rate of migration and cell-cell contacts in an integrin-dependent manner. Induces the formation of apical actin-dependent microvilli. Involved in the formation of a preapical plasma membrane subdomain to set up initial epithelial polarization and the apical lumen formation during renal tubulogenesis. Plays a role in cancer development and aggressiveness by inducing cell migration and invasion through its interaction with the actin-binding protein EZR. Affects EZR-dependent signaling events, leading to increased activities of the MAPK and PI3K pathways in cancer cells. In Canis lupus familiaris (Dog), this protein is Podocalyxin (PODXL).